We begin with the raw amino-acid sequence, 263 residues long: Microtubule-associated protein RP/EB family member 1 (263 aa).

The Calponin-homology (CH) domain occupies 14–116 (NLSRHDMLAW…FVQWFKKFFD (103 aa)). The EB1 C-terminal domain occupies 180–250 (KKAAGDDESA…LYATDEGFVI (71 aa)).

Belongs to the MAPRE family.

It localises to the cytoplasm. It is found in the cytoskeleton. The protein localises to the microtubule organizing center. Its subcellular location is the centrosome. The protein resides in the golgi apparatus. It localises to the spindle. It is found in the spindle pole. Plus-end tracking protein (+TIP) that binds to the plus-end of microtubules and regulates the dynamics of the microtubule cytoskeleton. Promotes cytoplasmic microtubule nucleation and elongation. Involved in mitotic spindle positioning by stabilizing microtubules and promoting dynamic connection between astral microtubules and the cortex during mitotic chromosome segregation. In Coturnix coturnix (Common quail), this protein is Microtubule-associated protein RP/EB family member 1 (MAPRE1).